The sequence spans 495 residues: UDP-N-acetylmuramoyl-L-alanyl-D-glutamate--2,6-diaminopimelate ligase (495 aa).

UDP-N-acetyl-alpha-D-muramoyl-L-alanyl-D-glutamate-binding positions include leucine 27, serine 29, and 44–46 (HQA). Residue 116 to 122 (GTNGKTT) coordinates ATP. Residues asparagine 157, 158-159 (TT), serine 185, glutamine 191, and arginine 193 each bind UDP-N-acetyl-alpha-D-muramoyl-L-alanyl-D-glutamate. Residue lysine 225 is modified to N6-carboxylysine. Residues arginine 390, 414–417 (DNPR), glycine 465, and glutamate 469 each bind meso-2,6-diaminopimelate. The Meso-diaminopimelate recognition motif signature appears at 414–417 (DNPR).

Belongs to the MurCDEF family. MurE subfamily. Mg(2+) serves as cofactor. In terms of processing, carboxylation is probably crucial for Mg(2+) binding and, consequently, for the gamma-phosphate positioning of ATP.

Its subcellular location is the cytoplasm. The enzyme catalyses UDP-N-acetyl-alpha-D-muramoyl-L-alanyl-D-glutamate + meso-2,6-diaminopimelate + ATP = UDP-N-acetyl-alpha-D-muramoyl-L-alanyl-gamma-D-glutamyl-meso-2,6-diaminopimelate + ADP + phosphate + H(+). The protein operates within cell wall biogenesis; peptidoglycan biosynthesis. Catalyzes the addition of meso-diaminopimelic acid to the nucleotide precursor UDP-N-acetylmuramoyl-L-alanyl-D-glutamate (UMAG) in the biosynthesis of bacterial cell-wall peptidoglycan. The protein is UDP-N-acetylmuramoyl-L-alanyl-D-glutamate--2,6-diaminopimelate ligase of Enterobacter sp. (strain 638).